Here is a 542-residue protein sequence, read N- to C-terminus: Calcium-dependent protein kinase 7 (542 aa).

Gly2 carries the N-myristoyl glycine lipid modification. Residues Tyr79–Ile337 enclose the Protein kinase domain. ATP-binding positions include Leu85–Thr93 and Lys108. Residue Asp203 is the Proton acceptor of the active site. Positions Ala343 to Ile373 are autoinhibitory domain. The region spanning Glu380–Glu415 is the EF-hand 1 domain. Asp393, Glu404, Asp431, Asn433, Thr435, Glu440, Asp465, Asp467, Ser469, Tyr471, Lys476, Asp499, Asn501, Asp503, Gln505, and Glu510 together coordinate Ca(2+). The EF-hand 2; degenerate domain occupies Phe416–Ile451. 2 EF-hand domains span residues Glu452–Glu487 and Asp488–Gly521.

It belongs to the protein kinase superfamily. Ser/Thr protein kinase family. CDPK subfamily. Expressed in roots. Expressed in leaf sheaths.

Its subcellular location is the membrane. It is found in the cytoplasm. The protein resides in the cytosol. The enzyme catalyses L-seryl-[protein] + ATP = O-phospho-L-seryl-[protein] + ADP + H(+). It carries out the reaction L-threonyl-[protein] + ATP = O-phospho-L-threonyl-[protein] + ADP + H(+). With respect to regulation, activated by calcium. Autophosphorylation may play an important role in the regulation of the kinase activity. May play a role in signal transduction pathways that involve calcium as a second messenger. May be a signaling component in the response to gibberellin and cold stress. The chain is Calcium-dependent protein kinase 7 from Oryza sativa subsp. japonica (Rice).